The sequence spans 199 residues: dITP/XTP pyrophosphatase (199 aa).

Substrate is bound at residue 8 to 13; that stretch reads SGNAGK. Catalysis depends on Asp-69, which acts as the Proton acceptor. Asp-69 provides a ligand contact to Mg(2+). Residues Ser-70, 154–157, Lys-177, and 182–183 contribute to the substrate site; these read FGYN and HR.

Belongs to the HAM1 NTPase family. As to quaternary structure, homodimer. The cofactor is Mg(2+).

It catalyses the reaction XTP + H2O = XMP + diphosphate + H(+). The enzyme catalyses dITP + H2O = dIMP + diphosphate + H(+). The catalysed reaction is ITP + H2O = IMP + diphosphate + H(+). Functionally, pyrophosphatase that catalyzes the hydrolysis of nucleoside triphosphates to their monophosphate derivatives, with a high preference for the non-canonical purine nucleotides XTP (xanthosine triphosphate), dITP (deoxyinosine triphosphate) and ITP. Seems to function as a house-cleaning enzyme that removes non-canonical purine nucleotides from the nucleotide pool, thus preventing their incorporation into DNA/RNA and avoiding chromosomal lesions. The protein is dITP/XTP pyrophosphatase of Xylella fastidiosa (strain 9a5c).